The sequence spans 345 residues: Dimethyladenosine transferase 1, mitochondrial (345 aa).

The transit peptide at 1 to 27 (MAASGKLGTFRLPPLPTIREIIKLFGL) directs the protein to the mitochondrion. Leu-38, Gly-63, Glu-85, Lys-86, Asp-111, Val-112, and Asn-141 together coordinate S-adenosyl-L-methionine.

The protein belongs to the class I-like SAM-binding methyltransferase superfamily. rRNA adenine N(6)-methyltransferase family. KsgA subfamily. As to quaternary structure, interacts with mitochondrial RNA polymerase POLRMT. Interacts with TFAM. Remains bound to the maturing mtSSU until the late stages of assembly. In terms of tissue distribution, ubiquitously expressed.

It is found in the mitochondrion. It carries out the reaction adenosine(N)/adenosine(N+1) in rRNA + 4 S-adenosyl-L-methionine = N(6)-dimethyladenosine(N)/N(6)-dimethyladenosine(N+1) in rRNA + 4 S-adenosyl-L-homocysteine + 4 H(+). Its function is as follows. Mitochondrial methyltransferase which uses S-adenosyl methionine to dimethylate two highly conserved adjacent adenosine residues (A1006 and A1007) within the loop of helix 45 at the 3-prime end of 12S rRNA, thereby regulating the assembly or stability of the small subunit of the mitochondrial ribosome. Also required for basal transcription of mitochondrial DNA, probably via its interaction with POLRMT and TFAM. Stimulates transcription independently of the methyltransferase activity. The protein is Dimethyladenosine transferase 1, mitochondrial (Tfb1m) of Mus musculus (Mouse).